A 174-amino-acid chain; its full sequence is Adenine phosphoribosyltransferase (174 aa).

This sequence belongs to the purine/pyrimidine phosphoribosyltransferase family. As to quaternary structure, homodimer.

The protein localises to the cytoplasm. It catalyses the reaction AMP + diphosphate = 5-phospho-alpha-D-ribose 1-diphosphate + adenine. Its pathway is purine metabolism; AMP biosynthesis via salvage pathway; AMP from adenine: step 1/1. Its function is as follows. Catalyzes a salvage reaction resulting in the formation of AMP, that is energically less costly than de novo synthesis. The protein is Adenine phosphoribosyltransferase of Dichelobacter nodosus (strain VCS1703A).